The chain runs to 941 residues: Glycine dehydrogenase (decarboxylating) (941 aa).

An N6-(pyridoxal phosphate)lysine modification is found at Lys692.

The protein belongs to the GcvP family. The glycine cleavage system is composed of four proteins: P, T, L and H. The cofactor is pyridoxal 5'-phosphate.

It catalyses the reaction N(6)-[(R)-lipoyl]-L-lysyl-[glycine-cleavage complex H protein] + glycine + H(+) = N(6)-[(R)-S(8)-aminomethyldihydrolipoyl]-L-lysyl-[glycine-cleavage complex H protein] + CO2. The glycine cleavage system catalyzes the degradation of glycine. The P protein binds the alpha-amino group of glycine through its pyridoxal phosphate cofactor; CO(2) is released and the remaining methylamine moiety is then transferred to the lipoamide cofactor of the H protein. This chain is Glycine dehydrogenase (decarboxylating), found in Mycobacterium bovis (strain ATCC BAA-935 / AF2122/97).